We begin with the raw amino-acid sequence, 264 residues long: Small ribosomal subunit protein eS1A (264 aa).

Residues 233-264 (GEGGGTGKPAGDETGAKVERADGYEPPVQESV) are disordered. Over residues 242-255 (AGDETGAKVERADG) the composition is skewed to basic and acidic residues.

This sequence belongs to the eukaryotic ribosomal protein eS1 family. Component of the small ribosomal subunit. Mature ribosomes consist of a small (40S) and a large (60S) subunit. The 40S subunit contains about 33 different proteins and 1 molecule of RNA (18S). The 60S subunit contains about 49 different proteins and 3 molecules of RNA (28S, 5.8S and 5S). Part of the small subunit (SSU) processome, composed of more than 70 proteins and the RNA chaperone small nucleolar RNA (snoRNA) U3.

It is found in the cytoplasm. The protein resides in the nucleus. Its subcellular location is the nucleolus. Its function is as follows. Component of the small ribosomal subunit. The ribosome is a large ribonucleoprotein complex responsible for the synthesis of proteins in the cell. Part of the small subunit (SSU) processome, first precursor of the small eukaryotic ribosomal subunit. During the assembly of the SSU processome in the nucleolus, many ribosome biogenesis factors, an RNA chaperone and ribosomal proteins associate with the nascent pre-rRNA and work in concert to generate RNA folding, modifications, rearrangements and cleavage as well as targeted degradation of pre-ribosomal RNA by the RNA exosome. May play a role during erythropoiesis. In Xenopus laevis (African clawed frog), this protein is Small ribosomal subunit protein eS1A (rps3a-a).